The following is a 78-amino-acid chain: Large ribosomal subunit protein uL24 (78 aa).

It belongs to the universal ribosomal protein uL24 family. Part of the 50S ribosomal subunit.

Functionally, one of two assembly initiator proteins, it binds directly to the 5'-end of the 23S rRNA, where it nucleates assembly of the 50S subunit. One of the proteins that surrounds the polypeptide exit tunnel on the outside of the subunit. In Campylobacter curvus (strain 525.92), this protein is Large ribosomal subunit protein uL24.